The sequence spans 234 residues: Small ribosomal subunit protein eS1y (234 aa).

Basic residues predominate over residues 1-18; it reads MAVGKNKRISKGKKGGKK. The interval 1–20 is disordered; that stretch reads MAVGKNKRISKGKKGGKKKA.

This sequence belongs to the eukaryotic ribosomal protein eS1 family. In terms of assembly, component of the small ribosomal subunit. Mature ribosomes consist of a small (40S) and a large (60S) subunit. The 40S subunit contains about 33 different proteins and 1 molecule of RNA (18S). The 60S subunit contains about 49 different proteins and 3 molecules of RNA (25S, 5.8S and 5S).

The protein resides in the cytoplasm. The sequence is that of Small ribosomal subunit protein eS1y from Vitis vinifera (Grape).